The chain runs to 280 residues: Endochitinase A (280 aa).

Residues M1 to A25 form the signal peptide. The 35-residue stretch at Q26–S60 folds into the Chitin-binding type-1 domain. 4 disulfide bridges follow: C28-C36, C30-C42, C35-C49, and C53-C58. The hinge region (poly-Gly) stretch occupies residues G61–G77. Positions A78–C280 are catalytic. The cysteines at positions 100 and 149 are disulfide-linked. E144 acts as the Proton donor in catalysis. N155 carries N-linked (GlcNAc...) asparagine glycosylation. Intrachain disulfides connect C161/C170 and C248/C280. Residue N277 is glycosylated (N-linked (GlcNAc...) asparagine).

This sequence belongs to the glycosyl hydrolase 19 family. Chitinase class IV subfamily.

It is found in the secreted. The catalysed reaction is Random endo-hydrolysis of N-acetyl-beta-D-glucosaminide (1-&gt;4)-beta-linkages in chitin and chitodextrins.. Inactivated by l-ethyl-3-(3-dimethylaminopropyl)carbodiimide (EDC) in the absence of exogenous nucleophiles (e.g. GlcNAc4, GlcNAc3 and GlcNAc2). Not inhibited by tetra-N-acetylchitopentaose or modified chitotetraose substrate TMG-chitotriomycin-pMP, containing a free, non-acetylated glucosaminyl residue or a N-trimethylamino glucosamine (TMG) residue at the non-reducing terminus, respectively. Its function is as follows. Defense against chitin-containing fungal pathogens. Hydrolyzes glycol chitin and tetra-N-acetylchitotetraose in vitro. Its action is countered by fungal polyglycine hydrolases and fungalysin, that cleave the chitin-binding domain from the protein. This chain is Endochitinase A, found in Zea mays (Maize).